A 276-amino-acid chain; its full sequence is Phospholipid phosphatase 2 (276 aa).

Over Met-1–Arg-4 the chain is Cytoplasmic. Residues Trp-5–Leu-25 form a helical membrane-spanning segment. Over Thr-26–Thr-51 the chain is Lumenal. The chain crosses the membrane as a helical span at residues Ile-52–Gly-72. The Cytoplasmic segment spans residues Glu-73–Asp-87. Residues Phe-88–Val-108 traverse the membrane as a helical segment. Over Ser-109–Leu-161 the chain is Lumenal. The interval Lys-117 to Pro-125 is phosphatase sequence motif I. N-linked (GlcNAc...) asparagine glycans are attached at residues Asn-139 and Asn-155. Residues Ser-162–Val-182 form a helical membrane-spanning segment. A phosphatase sequence motif II region spans residues Tyr-164–His-167. His-167 functions as the Proton donors in the catalytic mechanism. Topologically, residues Gln-183–Lys-189 are cytoplasmic. The chain crosses the membrane as a helical span at residues Trp-190–Gly-210. Residues Tyr-211–Leu-225 lie on the Lumenal side of the membrane. A phosphatase sequence motif III region spans residues Thr-212–Asp-223. His-219 functions as the Nucleophile in the catalytic mechanism. Residues Val-226–Phe-246 traverse the membrane as a helical segment. Over Lys-247 to Pro-276 the chain is Cytoplasmic. The interval Gln-252 to Pro-276 is disordered.

This sequence belongs to the PA-phosphatase related phosphoesterase family. In terms of assembly, forms functional homodimers and homooligomers. Can also form heterooligomers with PLPP1 and PLPP3. Post-translationally, N-glycosylated. In terms of tissue distribution, expressed in the brain.

The protein resides in the membrane. The protein localises to the cell membrane. It localises to the early endosome membrane. It is found in the endoplasmic reticulum membrane. The enzyme catalyses a 1,2-diacyl-sn-glycero-3-phosphate + H2O = a 1,2-diacyl-sn-glycerol + phosphate. It catalyses the reaction 1,2-dihexadecanoyl-sn-glycero-3-phosphate + H2O = 1,2-dihexadecanoyl-sn-glycerol + phosphate. It carries out the reaction 1,2-di-(9Z-octadecenoyl)-sn-glycero-3-phosphate + H2O = 1,2-di-(9Z-octadecenoyl)-sn-glycerol + phosphate. The catalysed reaction is a monoacyl-sn-glycero-3-phosphate + H2O = a monoacylglycerol + phosphate. The enzyme catalyses (9Z)-octadecenoyl-sn-glycero-3-phosphate + H2O = (9Z-octadecenoyl)-glycerol + phosphate. It catalyses the reaction sphing-4-enine 1-phosphate + H2O = sphing-4-enine + phosphate. It carries out the reaction an N-acylsphing-4-enine 1-phosphate + H2O = an N-acylsphing-4-enine + phosphate. The catalysed reaction is N-(octanoyl)-sphing-4-enine-1-phosphate + H2O = N-octanoylsphing-4-enine + phosphate. The enzyme catalyses N-(9Z-octadecenoyl)-ethanolamine phosphate + H2O = N-(9Z-octadecenoyl) ethanolamine + phosphate. Its pathway is lipid metabolism; phospholipid metabolism. Magnesium-independent phospholipid phosphatase. Insensitive to N-ethylmaleimide. Magnesium-independent phospholipid phosphatase that catalyzes the dephosphorylation of a variety of glycerolipid and sphingolipid phosphate esters including phosphatidate/PA, lysophosphatidate/LPA, sphingosine 1-phosphate/S1P and ceramide 1-phosphate/C1P. Has no apparent extracellular phosphatase activity and therefore most probably acts intracellularly. Also acts on N-oleoyl ethanolamine phosphate/N-(9Z-octadecenoyl)-ethanolamine phosphate, a potential physiological compound. Through dephosphorylation of these bioactive lipid mediators produces new bioactive compounds and may regulate signal transduction in different cellular processes. Indirectly regulates, for instance, cell cycle G1/S phase transition through its phospholipid phosphatase activity. In Rattus norvegicus (Rat), this protein is Phospholipid phosphatase 2.